The chain runs to 117 residues: Synaptobrevin homolog 1 (117 aa).

A disordered region spans residues 1-30; it reads MSSSTPFDPYALSEHDEERPQNVQSKSRTA. Residues 1-94 lie on the Cytoplasmic side of the membrane; that stretch reads MSSSTPFDPY…MWYKDLKMKM (94 aa). One can recognise a v-SNARE coiled-coil homology domain in the interval 28–88; it reads RTAELQAEID…NRVRKAMWYK (61 aa). A Glycyl lysine isopeptide (Lys-Gly) (interchain with G-Cter in ubiquitin) cross-link involves residue Lys63. A lipid anchor (S-palmitoyl cysteine) is attached at Cys95. The helical; Anchor for type IV membrane protein transmembrane segment at 95-111 threads the bilayer; the sequence is CLALVIIILLVVIIVPI. At 112 to 117 the chain is on the vesicular side; it reads AVHFSR.

Belongs to the synaptobrevin family. In terms of processing, palmitoylated by SWF1.

It localises to the endomembrane system. Its function is as follows. SNC1 and SNC2 are vesicle-targeting proteins essential for normal secretory traffic between the Golgi and the plasma membrane. They may also be involved in vesicle fusion. The protein is Synaptobrevin homolog 1 (SNC1) of Saccharomyces cerevisiae (strain ATCC 204508 / S288c) (Baker's yeast).